Here is a 154-residue protein sequence, read N- to C-terminus: Ribonuclease H (154 aa).

The RNase H type-1 domain maps to Met-1–Gly-142. 4 residues coordinate Mg(2+): Asp-10, Glu-48, Asp-70, and Asp-134.

Belongs to the RNase H family. As to quaternary structure, monomer. Mg(2+) is required as a cofactor.

It is found in the cytoplasm. The enzyme catalyses Endonucleolytic cleavage to 5'-phosphomonoester.. Functionally, endonuclease that specifically degrades the RNA of RNA-DNA hybrids. This Pseudoalteromonas translucida (strain TAC 125) protein is Ribonuclease H.